Consider the following 752-residue polypeptide: F-box and WD repeat domain containing protein 10B (752 aa).

6 WD repeats span residues 169–206 (GLNQ…TSLP), 451–490 (GHAG…CTRI), 493–532 (GHQG…KTFR), 534–569 (KDPI…LVKT), 572–609 (GHEG…ERCL), and 611–652 (AFKH…KVIK).

In terms of tissue distribution, expressed in pancreas, heart and skeletal muscle.

This is F-box and WD repeat domain containing protein 10B from Homo sapiens (Human).